The sequence spans 329 residues: 1-phosphatidylinositol phosphodiesterase (329 aa).

Positions Met1–Ala31 are cleaved as a signal peptide. A PI-PLC X-box domain is found at Asn51 to Arg194. The active-site Proton acceptor is His63. The Proton donor role is filled by His113.

The protein resides in the secreted. It carries out the reaction a 1,2-diacyl-sn-glycero-3-phospho-(1D-myo-inositol) = 1D-myo-inositol 1,2-cyclic phosphate + a 1,2-diacyl-sn-glycerol. In terms of biological role, cleaves glycosylphosphatidylinositol (GPI) and phosphatidylinositol (PI) anchors but not PI phosphates. The protein is 1-phosphatidylinositol phosphodiesterase of Bacillus thuringiensis.